A 400-amino-acid polypeptide reads, in one-letter code: Acetate kinase (400 aa).

Asn-8 is a binding site for Mg(2+). Lys-15 contacts ATP. Position 89 (Arg-89) interacts with substrate. The Proton donor/acceptor role is filled by Asp-146. ATP contacts are provided by residues His-206 to Gly-210, Asp-283 to Arg-285, and Gly-331 to Asn-335. Position 383 (Glu-383) interacts with Mg(2+).

Belongs to the acetokinase family. As to quaternary structure, homodimer. Mg(2+) is required as a cofactor. Requires Mn(2+) as cofactor.

The protein localises to the cytoplasm. It catalyses the reaction acetate + ATP = acetyl phosphate + ADP. It functions in the pathway metabolic intermediate biosynthesis; acetyl-CoA biosynthesis; acetyl-CoA from acetate: step 1/2. Its function is as follows. Catalyzes the formation of acetyl phosphate from acetate and ATP. Can also catalyze the reverse reaction. This is Acetate kinase from Streptococcus equi subsp. zooepidemicus (strain MGCS10565).